The sequence spans 289 residues: Proteasome subunit beta (289 aa).

The propeptide at 1–55 is removed in mature form; by autocatalysis; the sequence is MTWPLPDRLSINSAISGSAVDLSSFAEFLRRQAPELLPASIKHGGGAVGDQLPHA. Thr56 serves as the catalytic Nucleophile.

This sequence belongs to the peptidase T1B family. The 20S proteasome core is composed of 14 alpha and 14 beta subunits that assemble into four stacked heptameric rings, resulting in a barrel-shaped structure. The two inner rings, each composed of seven catalytic beta subunits, are sandwiched by two outer rings, each composed of seven alpha subunits. The catalytic chamber with the active sites is on the inside of the barrel. Has a gated structure, the ends of the cylinder being occluded by the N-termini of the alpha-subunits. Is capped by the proteasome-associated ATPase, ARC.

It localises to the cytoplasm. It catalyses the reaction Cleavage of peptide bonds with very broad specificity.. Its pathway is protein degradation; proteasomal Pup-dependent pathway. The formation of the proteasomal ATPase ARC-20S proteasome complex, likely via the docking of the C-termini of ARC into the intersubunit pockets in the alpha-rings, may trigger opening of the gate for substrate entry. Interconversion between the open-gate and close-gate conformations leads to a dynamic regulation of the 20S proteasome proteolysis activity. Its function is as follows. Component of the proteasome core, a large protease complex with broad specificity involved in protein degradation. The chain is Proteasome subunit beta from Mycobacterium marinum (strain ATCC BAA-535 / M).